Consider the following 430-residue polypeptide: uncharacterized protein (430 aa).

The next 10 membrane-spanning stretches (helical) occupy residues 13-33, 47-67, 88-108, 138-158, 228-248, 264-284, 296-316, 319-339, 358-378, and 383-403; these read FFAALASQMGTTVGNMAFAFF, LAELMYSLPTIFVFLIVGVVA, VVLFFTLFTGNIPLVFCILFI, GLNQMLFSIFMVFGVGIGAFM, LIFGFFIFGFVNGGFAVLPMF, SVFTIALGFGLLAGSVIGTLI, IPIFIAGLLIFVLGYTNILWV, AAAFALGMCIGPINIAIGGWM, FMMFAQSLTLGLVALLFPKFV, and YLYYGMGVIILLVFIFYFIAL.

This sequence belongs to the major facilitator superfamily.

The protein localises to the cell membrane. This is an uncharacterized protein from Bacillus subtilis (strain 168).